Consider the following 198-residue polypeptide: Prolactin (198 aa).

3 disulfide bridges follow: Cys4-Cys11, Cys58-Cys173, and Cys190-Cys198.

This sequence belongs to the somatotropin/prolactin family. As to expression, pituitary gland.

It is found in the secreted. This Chelonia mydas (Green sea-turtle) protein is Prolactin.